Here is a 511-residue protein sequence, read N- to C-terminus: Anthranilate synthase component 1 (511 aa).

The tract at residues 1–36 (MTTHAAEAPTTDPQGAPGSQKTPDATEAEEAARATV) is disordered. The segment covering 11–23 (TDPQGAPGSQKTP) has biased composition (polar residues). L-tryptophan contacts are provided by residues S84 and 292–294 (PYM). Residue 328-329 (GT) participates in chorismate binding. Position 355 (E355) interacts with Mg(2+). Chorismate-binding positions include Y443, R463, 477-479 (GAG), and G479. Mg(2+) is bound at residue E492.

Belongs to the anthranilate synthase component I family. Heterotetramer consisting of two non-identical subunits: a beta subunit (TrpG) and a large alpha subunit (TrpE). The cofactor is Mg(2+).

The catalysed reaction is chorismate + L-glutamine = anthranilate + pyruvate + L-glutamate + H(+). Its pathway is amino-acid biosynthesis; L-tryptophan biosynthesis; L-tryptophan from chorismate: step 1/5. Feedback inhibited by tryptophan. In terms of biological role, part of a heterotetrameric complex that catalyzes the two-step biosynthesis of anthranilate, an intermediate in the biosynthesis of L-tryptophan. In the first step, the glutamine-binding beta subunit (TrpG) of anthranilate synthase (AS) provides the glutamine amidotransferase activity which generates ammonia as a substrate that, along with chorismate, is used in the second step, catalyzed by the large alpha subunit of AS (TrpE) to produce anthranilate. In the absence of TrpG, TrpE can synthesize anthranilate directly from chorismate and high concentrations of ammonia. This is Anthranilate synthase component 1 (trpE) from Streptomyces coelicolor (strain ATCC BAA-471 / A3(2) / M145).